The following is a 261-amino-acid chain: Hydroxyethylthiazole kinase (261 aa).

Met38 contributes to the substrate binding site. ATP is bound by residues Arg114 and Thr159. Gly186 contributes to the substrate binding site.

The protein belongs to the Thz kinase family. Requires Mg(2+) as cofactor.

The catalysed reaction is 5-(2-hydroxyethyl)-4-methylthiazole + ATP = 4-methyl-5-(2-phosphooxyethyl)-thiazole + ADP + H(+). It participates in cofactor biosynthesis; thiamine diphosphate biosynthesis; 4-methyl-5-(2-phosphoethyl)-thiazole from 5-(2-hydroxyethyl)-4-methylthiazole: step 1/1. In terms of biological role, catalyzes the phosphorylation of the hydroxyl group of 4-methyl-5-beta-hydroxyethylthiazole (THZ). In Halalkalibacterium halodurans (strain ATCC BAA-125 / DSM 18197 / FERM 7344 / JCM 9153 / C-125) (Bacillus halodurans), this protein is Hydroxyethylthiazole kinase.